Consider the following 114-residue polypeptide: Large ribosomal subunit protein uL22 (114 aa).

This sequence belongs to the universal ribosomal protein uL22 family. Part of the 50S ribosomal subunit.

Functionally, this protein binds specifically to 23S rRNA; its binding is stimulated by other ribosomal proteins, e.g. L4, L17, and L20. It is important during the early stages of 50S assembly. It makes multiple contacts with different domains of the 23S rRNA in the assembled 50S subunit and ribosome. The globular domain of the protein is located near the polypeptide exit tunnel on the outside of the subunit, while an extended beta-hairpin is found that lines the wall of the exit tunnel in the center of the 70S ribosome. This chain is Large ribosomal subunit protein uL22, found in Desulfitobacterium hafniense (strain DSM 10664 / DCB-2).